A 287-amino-acid chain; its full sequence is Genetic interactor of prohibitin 7, mitochondrial (287 aa).

The transit peptide at 1–24 directs the protein to the mitochondrion; the sequence is MVLSNVKIFRLKSHRAFRIGPMIK. A helical transmembrane segment spans residues 250–266; sequence SKAIISFVVFVSIYVWL.

The protein belongs to the GEP7 family.

It is found in the mitochondrion membrane. Involved in respiratory growth and required for cell survival in the absence of prohibitins or GEM1. This is Genetic interactor of prohibitin 7, mitochondrial (GEP7) from Saccharomyces cerevisiae (strain ATCC 204508 / S288c) (Baker's yeast).